The following is a 78-amino-acid chain: Small ribosomal subunit protein bS16c (78 aa).

This sequence belongs to the bacterial ribosomal protein bS16 family.

It is found in the plastid. The protein localises to the chloroplast. The sequence is that of Small ribosomal subunit protein bS16c from Adiantum capillus-veneris (Maidenhair fern).